The primary structure comprises 320 residues: Ferrochelatase (320 aa).

2 residues coordinate Fe cation: His-194 and Glu-275.

This sequence belongs to the ferrochelatase family. As to quaternary structure, monomer.

The protein resides in the cytoplasm. It carries out the reaction heme b + 2 H(+) = protoporphyrin IX + Fe(2+). Its pathway is porphyrin-containing compound metabolism; protoheme biosynthesis; protoheme from protoporphyrin-IX: step 1/1. Its function is as follows. Catalyzes the ferrous insertion into protoporphyrin IX. This is Ferrochelatase from Escherichia coli O157:H7 (strain EC4115 / EHEC).